A 347-amino-acid chain; its full sequence is Endothelin receptor type B (347 aa).

At 1-7 (EIKETFK) the chain is on the extracellular side. The helical transmembrane segment at 8–32 (YINTVVSCLVFVLGIIGNSTLLRII) threads the bilayer. The Cytoplasmic portion of the chain corresponds to 33-43 (YKNKCMRNGPN). A helical membrane pass occupies residues 44–69 (ILIASLALGDLLHIIIDIPISVYKLL). Topologically, residues 70–81 (AEDWPFGVEMCK) are extracellular. A disulfide bond links cysteine 80 and cysteine 161. The chain crosses the membrane as a helical span at residues 82–103 (LVPFIQKASVGITVLSLCALSI). Over 104 to 124 (DRYRAVASWSRIKGIGVPKWT) the chain is Cytoplasmic. A helical membrane pass occupies residues 125 to 149 (AVEIVLIWVISVVLAVPEAIAFDMI). The Extracellular portion of the chain corresponds to 150-177 (TMEYRGKDLRICLLHPTQKTSFMMFYKQ). Residues 178–202 (AKDWWLFSFYFCLPLAITALFYTLM) form a helical membrane-spanning segment. Over 203–230 (TCEMLRKKSGMQIALNDHLKQRREVAKT) the chain is Cytoplasmic. Residues 231–256 (VFCLVLVFALCWLPLHLSRILKLTIY) traverse the membrane as a helical segment. Residues 257-268 (DQKDPNRCELLS) lie on the Extracellular side of the membrane. Residues 269 to 295 (FFLVMDYIGINMASLNSCINPIALYLV) form a helical membrane-spanning segment. Residues 296-347 (SKRFQNCFKSCLCCWCQSKDLLSLEERQSCLKFKANDHGYDNFRSSNKYSSS) are Cytoplasmic-facing. Residues cysteine 309 and cysteine 311 are each lipidated (S-palmitoyl cysteine).

It belongs to the G-protein coupled receptor 1 family. Endothelin receptor subfamily. EDNRB sub-subfamily.

Its subcellular location is the cell membrane. In terms of biological role, non-specific receptor for endothelin 1, 2, and 3. Mediates its action by association with G proteins that activate a phosphatidylinositol-calcium second messenger system. The protein is Endothelin receptor type B (EDNRB) of Coturnix japonica (Japanese quail).